Here is a 191-residue protein sequence, read N- to C-terminus: Inosine triphosphate pyrophosphatase (191 aa).

15 to 20 contacts ITP; it reads TGNANK. A Mg(2+)-binding site is contributed by Glu-43. ITP contacts are provided by residues Lys-55, 71–72, Lys-88, 147–150, Lys-168, and 173–174; these read DT, FGWD, and HR.

It belongs to the HAM1 NTPase family. In terms of assembly, homodimer. The cofactor is Mg(2+). Mn(2+) is required as a cofactor.

Its subcellular location is the cytoplasm. The protein localises to the nucleus. It catalyses the reaction ITP + H2O = IMP + diphosphate + H(+). The enzyme catalyses dITP + H2O = dIMP + diphosphate + H(+). The catalysed reaction is XTP + H2O = XMP + diphosphate + H(+). Its function is as follows. Pyrophosphatase that hydrolyzes non-canonical purine nucleotides such as inosine triphosphate (ITP), deoxyinosine triphosphate (dITP) or xanthosine 5'-triphosphate (XTP) to their respective monophosphate derivatives. The enzyme does not distinguish between the deoxy- and ribose forms. Probably excludes non-canonical purines from RNA and DNA precursor pools, thus preventing their incorporation into RNA and DNA and avoiding chromosomal lesions. The protein is Inosine triphosphate pyrophosphatase of Neurospora crassa (strain ATCC 24698 / 74-OR23-1A / CBS 708.71 / DSM 1257 / FGSC 987).